The primary structure comprises 333 residues: Homeobox protein Hox-D13 (333 aa).

Positions 1–24 are disordered; it reads MDGLRTDGGAAGAAPASSSSSSSV. Residues 12-24 show a composition bias toward low complexity; that stretch reads GAAPASSSSSSSV. Positions 266–325 form a DNA-binding region, homeobox; the sequence is GRKKRVPYTKLQLKELENEYAINKFINKDKRRRISAATNLSERQVTIWFQNRRVKDKKIV.

The protein belongs to the Abd-B homeobox family.

The protein resides in the nucleus. Sequence-specific transcription factor that binds gene promoters and activates their transcription. Part of a developmental regulatory system that provides cells with specific positional identities on the anterior-posterior axis. The polypeptide is Homeobox protein Hox-D13 (HOXD13) (Carollia perspicillata (Seba's short-tailed bat)).